The sequence spans 71 residues: DNA-directed RNA polymerase subunit omega (71 aa).

The protein belongs to the RNA polymerase subunit omega family. As to quaternary structure, the RNAP catalytic core consists of 2 alpha, 1 beta, 1 beta' and 1 omega subunit. When a sigma factor is associated with the core the holoenzyme is formed, which can initiate transcription.

The enzyme catalyses RNA(n) + a ribonucleoside 5'-triphosphate = RNA(n+1) + diphosphate. Its function is as follows. Promotes RNA polymerase assembly. Latches the N- and C-terminal regions of the beta' subunit thereby facilitating its interaction with the beta and alpha subunits. This Alkaliphilus oremlandii (strain OhILAs) (Clostridium oremlandii (strain OhILAs)) protein is DNA-directed RNA polymerase subunit omega.